A 350-amino-acid polypeptide reads, in one-letter code: Dihydroorotate dehydrogenase (quinone) (350 aa).

FMN is bound by residues 65-69 and threonine 89; that span reads AGLDK. Lysine 69 lines the substrate pocket. 114–118 is a substrate binding site; sequence NRLGF. FMN-binding residues include asparagine 149 and asparagine 182. Asparagine 182 lines the substrate pocket. Catalysis depends on serine 185, which acts as the Nucleophile. Asparagine 187 lines the substrate pocket. FMN contacts are provided by lysine 227 and threonine 255. 256 to 257 is a substrate binding site; sequence NT. Residues glycine 278, glycine 307, and 328-329 contribute to the FMN site; that span reads YT.

It belongs to the dihydroorotate dehydrogenase family. Type 2 subfamily. As to quaternary structure, monomer. It depends on FMN as a cofactor.

It localises to the cell membrane. The catalysed reaction is (S)-dihydroorotate + a quinone = orotate + a quinol. Its pathway is pyrimidine metabolism; UMP biosynthesis via de novo pathway; orotate from (S)-dihydroorotate (quinone route): step 1/1. In terms of biological role, catalyzes the conversion of dihydroorotate to orotate with quinone as electron acceptor. The chain is Dihydroorotate dehydrogenase (quinone) from Polaromonas naphthalenivorans (strain CJ2).